Reading from the N-terminus, the 461-residue chain is Phosphatidate cytidylyltransferase 1 (461 aa).

The tract at residues 1–68 is disordered; sequence MLELRHRGGC…PEVPPSSDRT (68 aa). Omega-N-methylarginine is present on Arg-7. Over residues 22–56 the composition is skewed to basic and acidic residues; sequence REGEAAGGDHETESTSDKETDIDDRYGDLDARGDS. Ser-35 and Ser-37 each carry phosphoserine. Transmembrane regions (helical) follow at residues 96 to 116, 149 to 169, 183 to 203, 230 to 250, 279 to 299, and 357 to 377; these read MISLFFLIIYMGSFMLMLLVL, FLLCVNYFFYGETVADYFATF, HRFISFALYLAGFCMFVLSLV, LVIQNLFEGMIWFLVPISSVI, GFIGGFFSTVIFGFIAAYVLS, and IALSTFASLIGPFGGFFASGF.

Belongs to the CDS family. In terms of assembly, homodimer. Interacts with FOS; this interaction may enhance catalytic activity. It depends on Mg(2+) as a cofactor. As to expression, brain, retina and testis. Found in cerebellar Purkinje cells, pineal body, inner segment of photoreceptor cells and postmitotic spermatocytes and spermatids.

The protein localises to the endoplasmic reticulum membrane. It catalyses the reaction a 1,2-diacyl-sn-glycero-3-phosphate + CTP + H(+) = a CDP-1,2-diacyl-sn-glycerol + diphosphate. It carries out the reaction 1-octadecanoyl-2-(5Z,8Z,11Z,14Z-eicosatetraenoyl)-sn-glycero-3-phosphate + CTP + H(+) = 1-octadecanoyl-2-(5Z,8Z,11Z,14Z-eicosatetraenoyl)-sn-glycero-3-cytidine-5'-diphosphate + diphosphate. The enzyme catalyses 1-octadecanoyl-2-(9Z,12Z-octadecadienoyl)-sn-glycero-3-phosphate + CTP + H(+) = 1-octadecanoyl-2-(9Z,12Z-octadecadienoyl)-sn-glycero-3-cytidine-5'-diphosphate + diphosphate. The catalysed reaction is 1-hexadecanoyl-2-(5Z,8Z,11Z,14Z-eicosatetraenoyl)-sn-glycero-3-phosphate + CTP + H(+) = 1-hexadecanoyl-2-(5Z,8Z,11Z,14Z-eicosatetraenoyl)-sn-glycero-3-cytidine-5'-diphosphate + diphosphate. It catalyses the reaction 1,2-di-(5Z,8Z,11Z,14Z)-eicosatetraenoyl-sn-glycero-3-phosphate + CTP + H(+) = 1,2-di-(5Z,8Z,11Z,14Z-eicosatetraenoyl)-sn-glycero-3-cytidine-5'-diphosphate + diphosphate. It carries out the reaction 1-octadecanoyl-2-(9Z-octadecenoyl)-sn-glycero-3-phosphate + CTP + H(+) = 1-octadecanoyl-2-(9Z-octadecenoyl)-sn-glycero-3-cytidine-5'-diphosphate + diphosphate. The enzyme catalyses 1-octadecanoyl-2-(4Z,7Z,10Z,13Z,16Z,19Z-docosahexaenoyl)-sn-glycero-3-phosphate + CTP + H(+) = 1-octadecanoyl-2-(4Z,7Z,10Z,13Z,16Z,19Z-docosahexaenoyl)-sn-glycero-3-cytidine-5'-diphosphate + diphosphate. The catalysed reaction is 1,2-di-(9Z,12Z-octadecadienoyl)-sn-glycero-3-phosphate + CTP + H(+) = 1,2-di-(9Z,12Z-octadecadienoyl)-sn-glycero-3-cytidine-5'-diphosphate + diphosphate. It catalyses the reaction 1,2-di-(9Z-octadecenoyl)-sn-glycero-3-phosphate + CTP + H(+) = 1,2-di-(9Z-octadecenoyl)-sn-glycero-3-cytidine-5'-diphosphate + diphosphate. The protein operates within phospholipid metabolism; CDP-diacylglycerol biosynthesis; CDP-diacylglycerol from sn-glycerol 3-phosphate: step 3/3. With respect to regulation, activated by GTP. Inhibited by CDP-diacylglycerol and by phosphatidylglycerol 4,5-bisphosphate (PPI2). In terms of biological role, catalyzes the conversion of phosphatidic acid (PA) to CDP-diacylglycerol (CDP-DAG), an essential intermediate in the synthesis of phosphatidylglycerol, cardiolipin and phosphatidylinositol. Exhibits almost no acyl chain preference for PA, showing no discrimination for the sn-1/sn-2 acyl chain composition of PAs. Plays an important role in regulatinng the growth of lipid droplets which are storage organelles at the center of lipid and energy homeostasis. Positively regulates the differentiation and development of adipocytes. This Rattus norvegicus (Rat) protein is Phosphatidate cytidylyltransferase 1.